A 197-amino-acid chain; its full sequence is Na(+)-translocating NADH-quinone reductase subunit E (197 aa).

6 helical membrane-spanning segments follow: residues 11–31 (SVFI…FLAV), 35–55 (VSTA…SVPV), 76–96 (FLKF…LEMF), 108–128 (LGIY…VSFM), 139–159 (VVYG…LAGI), and 175–195 (LGIT…FSGI).

This sequence belongs to the NqrDE/RnfAE family. In terms of assembly, composed of six subunits; NqrA, NqrB, NqrC, NqrD, NqrE and NqrF.

The protein resides in the cell inner membrane. It catalyses the reaction a ubiquinone + n Na(+)(in) + NADH + H(+) = a ubiquinol + n Na(+)(out) + NAD(+). Its function is as follows. NQR complex catalyzes the reduction of ubiquinone-1 to ubiquinol by two successive reactions, coupled with the transport of Na(+) ions from the cytoplasm to the periplasm. NqrA to NqrE are probably involved in the second step, the conversion of ubisemiquinone to ubiquinol. The protein is Na(+)-translocating NADH-quinone reductase subunit E of Neisseria meningitidis serogroup C (strain 053442).